We begin with the raw amino-acid sequence, 921 residues long: Dual serine/threonine and tyrosine protein kinase (921 aa).

Positions 645 to 899 (PKLGRELGRG…PLLGIVEPSL (255 aa)) constitute a Protein kinase domain. ATP contacts are provided by residues 651 to 659 (LGRGQYGVV) and Lys674. Asp770 functions as the Proton acceptor in the catalytic mechanism.

It belongs to the protein kinase superfamily. Ser/Thr protein kinase family.

It localises to the cytoplasm. The protein localises to the cell membrane. It is found in the apical cell membrane. The protein resides in the basolateral cell membrane. Its subcellular location is the cell junction. The catalysed reaction is L-seryl-[protein] + ATP = O-phospho-L-seryl-[protein] + ADP + H(+). It catalyses the reaction L-threonyl-[protein] + ATP = O-phospho-L-threonyl-[protein] + ADP + H(+). The enzyme catalyses L-tyrosyl-[protein] + ATP = O-phospho-L-tyrosyl-[protein] + ADP + H(+). In terms of biological role, may act as a positive regulator of ERK phosphorylation downstream of fibroblast growth factor-receptor activation. May induce both caspase-dependent apoptosis and caspase-independent cell death. May play a role in the embryonic development. The polypeptide is Dual serine/threonine and tyrosine protein kinase (dstyk) (Takifugu rubripes (Japanese pufferfish)).